The primary structure comprises 399 residues: S-adenosylmethionine synthase (399 aa).

136 to 141 serves as a coordination point for ATP; that stretch reads GTGSAD.

It belongs to the AdoMet synthase 2 family. Mg(2+) serves as cofactor.

The catalysed reaction is L-methionine + ATP + H2O = S-adenosyl-L-methionine + phosphate + diphosphate. It functions in the pathway amino-acid biosynthesis; S-adenosyl-L-methionine biosynthesis; S-adenosyl-L-methionine from L-methionine: step 1/1. Its function is as follows. Catalyzes the formation of S-adenosylmethionine from methionine and ATP. The sequence is that of S-adenosylmethionine synthase from Methanothrix thermoacetophila (strain DSM 6194 / JCM 14653 / NBRC 101360 / PT) (Methanosaeta thermophila).